Here is a 423-residue protein sequence, read N- to C-terminus: MSKASTFSAPKGIPDYVPPQSAEFVAVRDGLTRAARLAGYGHIELPIFEDTGLFARGVGESTDVVSKEMYTFADRGDRSVTLRPEGTAGVMRAVIEHSLDRGQLPVKVSYAGPFFRYERPQAGRYRQLQQVGVEAIGIDDPALDAEVIAIADAGFRSLGLDGFRLEITSLGDDTCRPQYRELLQEFLFALPLDEDTRRRAEINPLRVLDDKRPDVREMTAGAPLMLDHLSESCKAHFDEVLAHLDALGVPYVVNPRMVRGLDYYTKTTFEFVHDGLGAQSGIGGGGRYDGLMEQLGGQPLSGIGFGIGVDRTVLALEAEGKSVAPPARVDVFCVPMGAEAKAALVKIAHQLRANGIRVDLAYGNRGVKGSMKAADRSGAAVALVLGERELEEGVVVVKQLATGEQETVPLDQVVDKLGDLVEH.

It belongs to the class-II aminoacyl-tRNA synthetase family. Homodimer.

It localises to the cytoplasm. It catalyses the reaction tRNA(His) + L-histidine + ATP = L-histidyl-tRNA(His) + AMP + diphosphate + H(+). The protein is Histidine--tRNA ligase of Rhodococcus erythropolis (strain PR4 / NBRC 100887).